We begin with the raw amino-acid sequence, 143 residues long: Hemoglobin cathodic subunit alpha (143 aa).

The residue at position 1 (serine 1) is an N-acetylserine. The 143-residue stretch at serine 1–arginine 143 folds into the Globin domain. Histidine 59 provides a ligand contact to O2. Heme b is bound at residue histidine 89.

This sequence belongs to the globin family. In terms of assembly, heterotetramer of two alpha chains and two beta chains. Red blood cells.

Involved in oxygen transport from gills to the various peripheral tissues. This chain is Hemoglobin cathodic subunit alpha, found in Gymnothorax unicolor (Brown moray).